Here is a 242-residue protein sequence, read N- to C-terminus: Exosome complex component ski6 (242 aa).

This sequence belongs to the RNase PH family. Component of the RNA exosome complex. Specifically part of the catalytically inactive RNA exosome core complex (Exo-9) which may associate with the catalytic subunits rrp6 and dis3 in cytoplasmic- and nuclear-specific RNA exosome complex forms. Exo-9 is formed by a hexameric base ring of RNase PH domain-containing subunits and a cap ring consisting of csl4, rrp4 and rrp40.

It localises to the cytoplasm. Its subcellular location is the nucleus. It is found in the nucleolus. Its function is as follows. Non-catalytic component of the RNA exosome complex which has 3'-&gt;5' exoribonuclease activity and participates in a multitude of cellular RNA processing and degradation events. In the nucleus, the RNA exosome complex is involved in proper maturation of stable RNA species such as rRNA, snRNA and snoRNA, in the elimination of RNA processing by-products and non-coding 'pervasive' transcripts, such as antisense RNA species and cryptic unstable transcripts (CUTs), and of mRNAs with processing defects, thereby limiting or excluding their export to the cytoplasm. In the cytoplasm, the RNA exosome complex is involved in general mRNA turnover and in RNA surveillance pathways, preventing translation of aberrant mRNAs. The catalytic inactive RNA exosome core complex of 9 subunits (Exo-9) is proposed to play a pivotal role in the binding and presentation of RNA for ribonucleolysis, and to serve as a scaffold for the association with catalytic subunits and accessory proteins or complexes. ski6 is part of the hexameric ring of RNase PH domain-containing subunits proposed to form a central channel which threads RNA substrates for degradation. The chain is Exosome complex component ski6 (ski6) from Schizosaccharomyces pombe (strain 972 / ATCC 24843) (Fission yeast).